The chain runs to 271 residues: Putative pyruvate, phosphate dikinase regulatory protein (271 aa).

150-157 contacts ADP; it reads GVSRTSKT.

The protein belongs to the pyruvate, phosphate/water dikinase regulatory protein family. PDRP subfamily.

The catalysed reaction is N(tele)-phospho-L-histidyl/L-threonyl-[pyruvate, phosphate dikinase] + ADP = N(tele)-phospho-L-histidyl/O-phospho-L-threonyl-[pyruvate, phosphate dikinase] + AMP + H(+). The enzyme catalyses N(tele)-phospho-L-histidyl/O-phospho-L-threonyl-[pyruvate, phosphate dikinase] + phosphate + H(+) = N(tele)-phospho-L-histidyl/L-threonyl-[pyruvate, phosphate dikinase] + diphosphate. Its function is as follows. Bifunctional serine/threonine kinase and phosphorylase involved in the regulation of the pyruvate, phosphate dikinase (PPDK) by catalyzing its phosphorylation/dephosphorylation. The sequence is that of Putative pyruvate, phosphate dikinase regulatory protein from Oceanobacillus iheyensis (strain DSM 14371 / CIP 107618 / JCM 11309 / KCTC 3954 / HTE831).